The sequence spans 233 residues: Small ribosomal subunit protein uS3 (233 aa).

In terms of domain architecture, KH type-2 spans 39–107 (VRQYLKKELA…PAQINISEVR (69 aa)).

This sequence belongs to the universal ribosomal protein uS3 family. Part of the 30S ribosomal subunit. Forms a tight complex with proteins S10 and S14.

Its function is as follows. Binds the lower part of the 30S subunit head. Binds mRNA in the 70S ribosome, positioning it for translation. The polypeptide is Small ribosomal subunit protein uS3 (Photorhabdus laumondii subsp. laumondii (strain DSM 15139 / CIP 105565 / TT01) (Photorhabdus luminescens subsp. laumondii)).